We begin with the raw amino-acid sequence, 305 residues long: tRNA-splicing endonuclease (305 aa).

Active-site residues include Tyr-246, His-257, and Lys-287.

It belongs to the tRNA-intron endonuclease family. Archaeal long subfamily. In terms of assembly, homodimer.

It catalyses the reaction pretRNA = a 3'-half-tRNA molecule with a 5'-OH end + a 5'-half-tRNA molecule with a 2',3'-cyclic phosphate end + an intron with a 2',3'-cyclic phosphate and a 5'-hydroxyl terminus.. Its function is as follows. Endonuclease that removes tRNA introns. Cleaves pre-tRNA at the 5'- and 3'-splice sites to release the intron. The products are an intron and two tRNA half-molecules bearing 2',3' cyclic phosphate and 5'-OH termini. Recognizes a pseudosymmetric substrate in which 2 bulged loops of 3 bases are separated by a stem of 4 bp. This is tRNA-splicing endonuclease from Archaeoglobus fulgidus (strain ATCC 49558 / DSM 4304 / JCM 9628 / NBRC 100126 / VC-16).